The primary structure comprises 201 residues: ADP-ribosylation factor-like protein 4D (201 aa).

Glycine 2 carries the N-myristoyl glycine lipid modification. Residues 28–35, 76–80, and 135–138 contribute to the GTP site; these read GLDSAGKT, DVGGQ, and NKQD.

Belongs to the small GTPase superfamily. Arf family. As to quaternary structure, interacts with CYTH2; the interaction is direct and ARL4D GTP-dependent. Does not interact with ARL4D.

The protein localises to the nucleus. It localises to the nucleolus. The protein resides in the cell membrane. Its subcellular location is the cytoplasm. Its function is as follows. Small GTP-binding protein which cycles between an inactive GDP-bound and an active GTP-bound form, and the rate of cycling is regulated by guanine nucleotide exchange factors (GEF) and GTPase-activating proteins (GAP). GTP-binding protein that does not act as an allosteric activator of the cholera toxin catalytic subunit. Recruits CYTH1, CYTH2, CYTH3 and CYTH4 to the plasma membrane in GDP-bound form. The chain is ADP-ribosylation factor-like protein 4D (Arl4d) from Mus musculus (Mouse).